A 505-amino-acid polypeptide reads, in one-letter code: MDLLLLEKTLLGLFAAIIVASIVSKLRGKKFKLPPGPIPVPVFGNWLQVGDDLNHRNLSDYAKKFGEIFLLRMGQRNLVVVSSPELAKEVLHTQGVEFGSRTRNVVFDIFTGKGQDMVFTVYGEHWRKMRRIMTVPFFTNKVVQQYRYGWEEEAARVVEDVKKNPESATNGIVLRRRLQLMMYNNMYRIMFDRRFESEDDPLFVKLKALNGERSRLAQGFEYNYGDFIPILRPFLRGYLRICKEVKERRLQLFKDYFVDERKKFGSTKSMDNNSLKCAIDHILEAQQKGEINEDNVLYIVENINVAAIETTLWSIEWGIAELVNHPEIQKKLRDELETVLGPGVQITEPDTYKLPYLQAVIKETLRLRMAIPLFLPHMNLHDAKLGGYDIPAESKILVNAWFLANNPEHWKKPEEFRPERFLEEESKVEANGNDFRYLPFGVGRRSCPGIILALPILGITIGRLVQNFELLPPPGKSKIDTSEKGGQFSLHILKHSTIVLKPRTF.

A helical membrane pass occupies residues 3–23 (LLLLEKTLLGLFAAIIVASIV). Residues 213–218 (RSRLAQ) and alanine 306 contribute to the (E)-cinnamate site. Cysteine 447 serves as a coordination point for heme.

The protein belongs to the cytochrome P450 family. Requires heme as cofactor.

The protein resides in the membrane. It carries out the reaction (E)-cinnamate + reduced [NADPH--hemoprotein reductase] + O2 = (E)-4-coumarate + oxidized [NADPH--hemoprotein reductase] + H2O + H(+). Its pathway is phenylpropanoid metabolism; trans-4-coumarate biosynthesis; trans-4-coumarate from trans-cinnamate: step 1/1. Its function is as follows. Catalyzes the first oxidative step of the phenylpropanoid pathway in higher plants by transforming trans-cinnamate into p-coumarate. The compounds formed by this pathway are essential components for lignification, pollination, and defense against ultraviolet light, predators and pathogens. This chain is Trans-cinnamate 4-monooxygenase (CYP73A4), found in Catharanthus roseus (Madagascar periwinkle).